Consider the following 746-residue polypeptide: Protein C-mannosyl-transferase DPY19L1 (746 aa).

Positions 1 to 68 (MVLQARSKHR…RAETAAPAPD (68 aa)) are disordered. The segment covering 14–27 (PRPPRPARSSPPPL) has biased composition (pro residues). 12 helical membrane-spanning segments follow: residues 93-113 (STLL…TQLF), 139-159 (YSYF…WMIM), 227-247 (ACFY…LFFI), 248-268 (YGTY…CFFF), 308-328 (YRGS…PWQF), 329-349 (AQFV…VGYI), 357-377 (IIYT…GNSM), 378-398 (LLTS…AMKP), 405-425 (VSEL…TVTL), 481-501 (LLLP…INDM), 520-540 (GELV…ILIM), and 562-582 (LFGW…VLAA).

The protein belongs to the dpy-19 family.

The protein resides in the endoplasmic reticulum membrane. The catalysed reaction is L-tryptophyl-[protein] + a di-trans,poly-cis-dolichyl beta-D-mannosyl phosphate = C-alpha-D-mannosyl-L-tryptophyl-[protein] + a di-trans,poly-cis-dolichyl phosphate + H(+). The protein operates within protein modification; protein glycosylation. Functionally, C-mannosyltransferase that mediates the C-mannosylation tryptophan residues on target proteins. The reaction occurs on the luminal side of the endoplasmic reticulum and involves the transfer of a mannose unit from a dolichylphosphate mannose (Dol-P-Man) donor to an acceptor protein containing a WxxW consensus sequence. C-mannosylates the first two tryptophans in the WxxWxxWxxC sequence motif in thrombospondin (TSP) type-1 repeats of UNC5A. Regulates neurite extension during development. The protein is Protein C-mannosyl-transferase DPY19L1 (Dpy19l1) of Rattus norvegicus (Rat).